We begin with the raw amino-acid sequence, 467 residues long: Putative gluconeogenesis factor (467 aa).

The span at 1–12 (MSAPPAPPPDRS) shows a compositional bias: pro residues. Positions 1–27 (MSAPPAPPPDRSAPPDRTDSAQTEPTR) are disordered.

The protein belongs to the gluconeogenesis factor family.

It localises to the cytoplasm. Required for morphogenesis under gluconeogenic growth conditions. In Deinococcus radiodurans (strain ATCC 13939 / DSM 20539 / JCM 16871 / CCUG 27074 / LMG 4051 / NBRC 15346 / NCIMB 9279 / VKM B-1422 / R1), this protein is Putative gluconeogenesis factor.